The sequence spans 99 residues: DNA-directed RNA polymerase subunit Rpo11 (99 aa).

It belongs to the archaeal Rpo11/eukaryotic RPB11/RPC19 RNA polymerase subunit family. As to quaternary structure, part of the RNA polymerase complex. Forms an Rpo3-Rpo10-Rpo11-Rpo12 complex upon coexpression.

Its subcellular location is the cytoplasm. It catalyses the reaction RNA(n) + a ribonucleoside 5'-triphosphate = RNA(n+1) + diphosphate. In terms of biological role, DNA-dependent RNA polymerase (RNAP) catalyzes the transcription of DNA into RNA using the four ribonucleoside triphosphates as substrates. In Methanocaldococcus jannaschii (strain ATCC 43067 / DSM 2661 / JAL-1 / JCM 10045 / NBRC 100440) (Methanococcus jannaschii), this protein is DNA-directed RNA polymerase subunit Rpo11.